The sequence spans 122 residues: Large ribosomal subunit protein uL14 (122 aa).

It belongs to the universal ribosomal protein uL14 family. Part of the 50S ribosomal subunit. Forms a cluster with proteins L3 and L19. In the 70S ribosome, L14 and L19 interact and together make contacts with the 16S rRNA in bridges B5 and B8.

Functionally, binds to 23S rRNA. Forms part of two intersubunit bridges in the 70S ribosome. This is Large ribosomal subunit protein uL14 from Laribacter hongkongensis (strain HLHK9).